A 203-amino-acid chain; its full sequence is Twist-related protein 1 (203 aa).

Over residues 1-18 (MMQDVSSSPVSPADDSLS) the composition is skewed to low complexity. The tract at residues 1–106 (MMQDVSSSPV…GGGSPQSYEE (106 aa)) is disordered. The segment covering 34 to 43 (RGGRKRRSSS) has biased composition (basic residues). Gly residues-rich tracts occupy residues 47–66 (AGGGAGPGGAASGGVGGGDE) and 81–100 (GCGGGGGGGAGGGSSSGGGS). Residues 109–160 (TQRVMANVRERQRTQSLNEAFAALRKIIPTLPSDKLSKIQTLKLAARYIDFL) form the bHLH domain. Residues 162–192 (QVLQSDELDSKMASCSYVAHERLSYAFSVWR) are sufficient for transactivation activity.

Efficient DNA binding requires dimerization with another bHLH protein. Homodimer or heterodimer with E proteins such as TCF3. ID1 binds preferentially to TCF3 but does not interact efficiently with TWIST1 so ID1 levels control the amount of TCF3 available to dimerize with TWIST and thus determine the type of dimer formed.

It localises to the nucleus. Functionally, acts as a transcriptional regulator. Inhibits myogenesis by sequestrating E proteins, inhibiting trans-activation by MEF2, and inhibiting DNA-binding by MYOD1 through physical interaction. This interaction probably involves the basic domains of both proteins. Also represses expression of pro-inflammatory cytokines such as TNFA and IL1B. Regulates cranial suture patterning and fusion. Activates transcription as a heterodimer with E proteins. Regulates gene expression differentially, depending on dimer composition. Homodimers induce expression of FGFR2 and POSTN while heterodimers repress FGFR2 and POSTN expression and induce THBS1 expression. Heterodimerization is also required for osteoblast differentiation. Represses the activity of the circadian transcriptional activator: NPAS2-BMAL1 heterodimer. The protein is Twist-related protein 1 (TWIST1) of Pongo pygmaeus (Bornean orangutan).